The sequence spans 336 residues: Transmembrane protease serine 12 (336 aa).

An N-terminal signal peptide occupies residues 1-18 (MASWALSAALLCLGGAFA). Topologically, residues 19–312 (YSELHSLSLR…HYLSQGNINR (294 aa)) are extracellular. The Peptidase S1 domain maps to 66-306 (IIGGSQADTG…FQEWMTHYLS (241 aa)). Residues C95 and C111 are joined by a disulfide bond. Residues H110 and D159 each act as charge relay system in the active site. Disulfide bonds link C194/C262, C225/C241, and C252/C282. N-linked (GlcNAc...) asparagine glycans are attached at residues N207, N237, and N246. S256 acts as the Charge relay system in catalysis. Residues 313–333 (LFNMDIVLGQVLTALGSVILL) form a helical membrane-spanning segment. Topologically, residues 334-336 (GVT) are cytoplasmic.

Belongs to the peptidase S1 family. As to expression, exclusively expressed in the testis, from spermatocytes to elongated spermatids (at protein level).

Its subcellular location is the cell membrane. It localises to the cytoplasmic vesicle. The protein localises to the secretory vesicle. The protein resides in the acrosome. Its function is as follows. Required for male fertility. Plays a critical role in sperm capacitation and acrosome reactions during fertilization, and also plays a role in the regulation of proteins involved in spermatogenesis. Regulates protein pathways that promote chromosomal synapsis formation, double-strand break repair, formation of the inner mitochondrial membrane cristae and apoptosis in developing sperm. Required for normal sperm motility and binding to the zona pellucida, potentially via a role in ADAM3 protein maturation. This is Transmembrane protease serine 12 from Mus musculus (Mouse).